We begin with the raw amino-acid sequence, 100 residues long: Small ribosomal subunit protein bS18 (100 aa).

Residues 1-23 form a disordered region; sequence MTFIRKPAGQAKPQKYSTDAYGR.

The protein belongs to the bacterial ribosomal protein bS18 family. In terms of assembly, part of the 30S ribosomal subunit. Forms a tight heterodimer with protein bS6.

In terms of biological role, binds as a heterodimer with protein bS6 to the central domain of the 16S rRNA, where it helps stabilize the platform of the 30S subunit. In Endomicrobium trichonymphae, this protein is Small ribosomal subunit protein bS18.